A 322-amino-acid chain; its full sequence is MLPAIIFRQVQRPLHHGAATLEHVLGVGGSSFVNCLNRYAAATGFIRISFLDIKRRRNYELARLRLYADEKKQSLHLRTLQGRHLLQGVIERKNFLVDDIREARHKVQERVREKIDEIREERENIMTIPNMLTISRAVLSPYIGYVIVQGDFTLGMSLLAFAGITDLLDGQIARRWPSQASKFGSFLDPMADKLLMGSLVISLCYTDLLPMWLMGIVVFRDVFLLGAGFVIRYISLPPPKTFSRYFDATHVTAQLEPTLLSKINTGVQLATIGLSLGAPIWNYLDHPALQGLWYLTGLTTAATALSYVMNRHNTFKIIQKKT.

The next 3 membrane-spanning stretches (helical) occupy residues 143–163 (IGYV…AFAG), 199–219 (LVIS…IVVF), and 289–309 (LQGL…SYVM).

This sequence belongs to the CDP-alcohol phosphatidyltransferase class-I family.

Its subcellular location is the mitochondrion inner membrane. It catalyses the reaction a CDP-1,2-diacyl-sn-glycerol + a 1,2-diacyl-sn-glycero-3-phospho-(1'-sn-glycerol) = a cardiolipin + CMP + H(+). Its function is as follows. Catalyzes the synthesis of cardiolipin (CL) (diphosphatidylglycerol) by specifically transferring a phosphatidyl group from CDP-diacylglycerol to phosphatidylglycerol (PG). CL is a key phospholipid in mitochondrial membranes and plays important roles in maintaining the functional integrity and dynamics of mitochondria under both optimal and stress conditions. The protein is Probable cardiolipin synthase (CMP-forming) (CLS) of Drosophila melanogaster (Fruit fly).